The following is an 833-amino-acid chain: DNA helicase MCM8 (833 aa).

Positions 395 to 602 (LLKLVVNSLC…QHDHLLSEHV (208 aa)) constitute an MCM domain. 447–454 (GDPGLGKS) provides a ligand contact to ATP. S623 is modified (phosphoserine).

The protein belongs to the MCM family. As to quaternary structure, component of the MCM8-MCM9 complex, which forms a hexamer composed of MCM8 and MCM9. Interacts with the DNA mismatch repair (MMR) complex composed at least of MSH2, MSH3, MSH6, PMS1 and MLH1. Interacts with RAD51; the interaction recruits RAD51 to DNA damage sites. Interacts with the MRN complex composed of MRE11, RAD50 and NBN/NBS1. Interacts with CDC6 and ORC2. Interacts with HROB; the interaction recruits the MCM8-MCM9 complex to DNA damage sites.

The protein localises to the nucleus. It localises to the chromosome. It catalyses the reaction ATP + H2O = ADP + phosphate + H(+). In terms of biological role, component of the MCM8-MCM9 complex, a complex involved in the repair of double-stranded DNA breaks (DBSs) and DNA interstrand cross-links (ICLs) by homologous recombination (HR). Required for DNA resection by the MRE11-RAD50-NBN/NBS1 (MRN) complex by recruiting the MRN complex to the repair site and by promoting the complex nuclease activity. Probably by regulating the localization of the MNR complex, indirectly regulates the recruitment of downstream effector RAD51 to DNA damage sites including DBSs and ICLs. The MCM8-MCM9 complex is dispensable for DNA replication and S phase progression. However, may play a non-essential for DNA replication: may be involved in the activation of the prereplicative complex (pre-RC) during G(1) phase by recruiting CDC6 to the origin recognition complex (ORC). Probably by regulating HR, plays a key role during gametogenesis. Stabilizes MCM9 protein. The polypeptide is DNA helicase MCM8 (Mcm8) (Mus musculus (Mouse)).